The sequence spans 221 residues: Endonuclease V (221 aa).

Residues D43 and D111 each coordinate Mg(2+).

The protein belongs to the endonuclease V family. Mg(2+) serves as cofactor.

Its subcellular location is the cytoplasm. The enzyme catalyses Endonucleolytic cleavage at apurinic or apyrimidinic sites to products with a 5'-phosphate.. Functionally, DNA repair enzyme involved in the repair of deaminated bases. Selectively cleaves double-stranded DNA at the second phosphodiester bond 3' to a deoxyinosine leaving behind the intact lesion on the nicked DNA. This Azotobacter vinelandii (strain DJ / ATCC BAA-1303) protein is Endonuclease V.